Consider the following 152-residue polypeptide: Melatonin receptor type 1B (152 aa).

Over 1 to 12 (HSFVYEKLFSLW) the chain is Cytoplasmic. The chain crosses the membrane as a helical span at residues 13-33 (NTILYVCLIWTLTVVATVPNF). The Extracellular segment spans residues 34-57 (FVGSLEYDPRIYSCTFVQTVSSSY). Residues 58-78 (TITVVVIHFILPITVVTFCYL) traverse the membrane as a helical segment. Topologically, residues 79-110 (RIWILVIQVRRKVKSEFKPRMKQSDFRNFLTM) are cytoplasmic. A helical transmembrane segment spans residues 111–131 (FVVFVIFAFCWAPLNFIGLAV). The Extracellular segment spans residues 132-144 (SINPTEVAPKIPE). A helical membrane pass occupies residues 145–152 (WLFVVSYF).

This sequence belongs to the G-protein coupled receptor 1 family.

It localises to the cell membrane. High affinity receptor for melatonin. The activity of this receptor is mediated by pertussis toxin sensitive G proteins that inhibits adenylate cyclase activity. This chain is Melatonin receptor type 1B (mtnr1b), found in Xenopus laevis (African clawed frog).